A 282-amino-acid polypeptide reads, in one-letter code: MSSSKSLDWADDEDYGTGLPSIQTFDNPDGTKTMIEFRIDDNGKKVKVTRVIRKTVITERVQHAVAERKKWKKFGKEAGKNSGVDARTTSVGENVQLRLQLGWTTTKEEEQDEAALAAAKVKAKGSSVVRCRACKGNHFTAQCPYKSIIGPVDEPPLDASPVSSRASGALGEKGRYIAPHLRAGSGRESGDSMFKRERDDSATLRVTNLSDDTREEELRDLFRRFGGIQRVYLAKDKETGRAKGFAFVSYYDRDCAIKARDRLDGYGWNNLILRCEFSKPRD.

The interval 1-27 is disordered; sequence MSSSKSLDWADDEDYGTGLPSIQTFDN. Residues serine 160 and serine 164 each carry the phosphoserine modification. The 79-residue stretch at 202–280 folds into the RRM domain; that stretch reads ATLRVTNLSD…LILRCEFSKP (79 aa).

Belongs to the eIF-3 subunit G family. In terms of assembly, component of the eukaryotic translation initiation factor 3 (eIF-3) complex. The eIF-3 complex appears to include tif32/eif3a, SPAC25G10.08/eif3b, tif33/eif3c, SPBC4C3.07/eif3f, tif35/eif3g and sum1/eif3i. This set of common subunits may also associate exclusively with either moe1/eif3d and int6/eif3e, or with SPAC821.05/eif3h and SPAC1751.03/eif3m. The eIF-3 complex may also include SPAC3A12.13c/eif3j.

The protein localises to the cytoplasm. In terms of biological role, RNA-binding component of the eukaryotic translation initiation factor 3 (eIF-3) complex, which is involved in protein synthesis of a specialized repertoire of mRNAs and, together with other initiation factors, stimulates binding of mRNA and methionyl-tRNAi to the 40S ribosome. The eIF-3 complex specifically targets and initiates translation of a subset of mRNAs involved in cell proliferation. This subunit can bind 18S rRNA. In Schizosaccharomyces pombe (strain 972 / ATCC 24843) (Fission yeast), this protein is Eukaryotic translation initiation factor 3 subunit G (tif35).